The following is a 911-amino-acid chain: Inositol 1,4,5-triphosphate receptor associated 1 (911 aa).

Basic and acidic residues predominate over residues 1–11 (MVKAPQSEERL). Disordered regions lie at residues 1–21 (MVKAPQSEERLAGGGKGNNSV), 39–122 (EVPG…HRHL), 174–405 (LTRR…GPRL), and 478–498 (EQEKGHPSELSSAIEEEESKG). A compositionally biased stretch (polar residues) spans 68-86 (AAQSPAGQDPATTGISCSP). Positions 111 to 122 (HSPHRRLSHRHL) are enriched in basic residues. Ser118 is modified (phosphoserine). Residues 152–184 (SEEDKKKNLALLEEAKLVSERFLTRRGRKSRSS) are interaction with PRKG1. Residues 183 to 212 (SSPGESSPAVSPNLSPGASPASSQSNSLTV) are compositionally biased toward polar residues. Over residues 277–292 (TVEKSKEITIEQKENF) the composition is skewed to basic and acidic residues. Residue Ser393 is modified to Phosphoserine. Residues 534–580 (NVFVQLSLAFRNDSYTLESRINQAERERNLTEENTEKELENFKASIT) are interaction with ITPR1. Residues 547–645 (SYTLESRINQ…MQYVENLKRT (99 aa)) are a coiled coil. 2 positions are modified to phosphoserine: Ser683 and Ser696. 2 disordered regions span residues 706–766 (LNLP…TPSC) and 787–829 (YQEG…KEQR). Residues 708–728 (LPGQSPSSSPIPSLPALSESS) show a composition bias toward low complexity. Residues 790 to 801 (GLKKTKELQGLR) show a composition bias toward basic and acidic residues. Residues 802–825 (EEEEEQKSESPEEPEEVAETEEEE) are compositionally biased toward acidic residues. The chain crosses the membrane as a helical span at residues 853–873 (VIWMMAAAMLVLTVVLGLYGS).

In terms of assembly, interacts with PRKG1/cGKI-beta and ITPR1/IP3R type I. Part of cGMP kinase signaling complex at least composed of ACTA2/alpha-actin, CNN1/calponin H1, PLN/phospholamban, PRKG1 and ITPR1. Interacts with HCN4; regulates HCN4 channel activity. Post-translationally, phosphorylated by PRKG1/cGKI-beta. Phosphorylation at Ser-696 is necessary for PRKG1-induced calcium release in the cytosol. In terms of tissue distribution, highly expressed in trachea, aorta and uterus.

It localises to the sarcoplasmic reticulum. Its subcellular location is the cytoplasm. The protein resides in the perinuclear region. It is found in the membrane. Functionally, plays a role as NO/PRKG1-dependent regulator of IP3-induced calcium release; its phosphorylation by PRKG1 inhibits bradykinin and IP3-induced calcium release from intracellular stores. Recruits PRKG1 to the endoplasmic reticulum and may mediate the assembly of PRKG1 and ITPR1 in a macrocomplex. Involved in PRKG1 signaling cascade leading to inhibition of platelet activation and aggregation. Also mediates NO-dependent inhibition of calcium signaling in gastrointestinal smooth muscle contributing to NO-dependent relaxation. Plays a role in the regulation of cellular excitability by regulating the hyperpolarization-activated cyclic nucleotide-gated HCN4 channel activity. The sequence is that of Inositol 1,4,5-triphosphate receptor associated 1 (IRAG1) from Bos taurus (Bovine).